Reading from the N-terminus, the 156-residue chain is Small ribosomal subunit protein uS7 (156 aa).

This sequence belongs to the universal ribosomal protein uS7 family. As to quaternary structure, part of the 30S ribosomal subunit. Contacts proteins S9 and S11.

Functionally, one of the primary rRNA binding proteins, it binds directly to 16S rRNA where it nucleates assembly of the head domain of the 30S subunit. Is located at the subunit interface close to the decoding center, probably blocks exit of the E-site tRNA. The polypeptide is Small ribosomal subunit protein uS7 (Parasynechococcus marenigrum (strain WH8102)).